The primary structure comprises 136 residues: ATP synthase epsilon chain (136 aa).

Residues 88 to 136 (DASSAESDLQAARNEVSKMEGQPASADKVKAQQSLDRARARVQAAKNQD) are disordered.

It belongs to the ATPase epsilon chain family. F-type ATPases have 2 components, CF(1) - the catalytic core - and CF(0) - the membrane proton channel. CF(1) has five subunits: alpha(3), beta(3), gamma(1), delta(1), epsilon(1). CF(0) has three main subunits: a, b and c.

The protein resides in the cellular thylakoid membrane. Produces ATP from ADP in the presence of a proton gradient across the membrane. In Synechococcus sp. (strain WH7803), this protein is ATP synthase epsilon chain.